The sequence spans 728 residues: tRNA (guanine(27)-N(2))-dimethyltransferase (728 aa).

A compositionally biased stretch (acidic residues) spans 1–10 (MENMAEEELL). Disordered stretches follow at residues 1-78 (MENM…SKRH) and 98-118 (DVDS…SQTC). Residue Thr-23 is modified to Phosphothreonine. The segment covering 23-33 (TPAPDSAPVPA) has biased composition (pro residues). The segment covering 34 to 46 (PAADTALDSAPTP) has biased composition (low complexity). The span at 47–61 (DSDPAPALAPAPAPA) shows a compositional bias: pro residues. The residue at position 63 (Ser-63) is a Phosphoserine. The span at 101-118 (SASSLNSDNPGTENSQTC) shows a compositional bias: polar residues. The Nucleolar localization signal signature appears at 132-136 (HKLRR). The C2H2-type zinc-finger motif lies at 181-203 (YHCIICSATITRRTDMLGHVKRH). A Trm1 methyltransferase domain is found at 224–683 (EILKETDTDI…APLMQFKSIL (460 aa)). S-adenosyl-L-methionine contacts are provided by Arg-257, Asp-304, Asp-352, and Ala-353. 4 residues coordinate Zn(2+): Cys-483, Cys-486, Cys-508, and Cys-510. Lys-580 participates in a covalent cross-link: Glycyl lysine isopeptide (Lys-Gly) (interchain with G-Cter in SUMO2). Ser-607 carries the phosphoserine modification. Residues 693–728 (GAQSEGQMPPAAEDTVTDRVEMSVSDKAEASGCRRW) form a disordered region. The segment covering 708–721 (VTDRVEMSVSDKAE) has biased composition (basic and acidic residues).

The protein belongs to the class I-like SAM-binding methyltransferase superfamily. Trm1 family. As to expression, expressed in various neuronal structures during embryonic development, including spinal ganglia, trigeminal nerve and ganglion, olfactory and nasopharyngeal epithelium, nuclei of the metencephalon, thalamus and medulla oblongata. Also expressed in lung, esophagus, epiglottis, ependyma, vertebral column, spinal cord and brown adipose tissue. Expression persists in the adult brain with dynamically changing patterns in cortex and cerebellum.

It is found in the nucleus. It localises to the nucleolus. It carries out the reaction guanosine(27) in tRNA(Tyr) + 2 S-adenosyl-L-methionine = N(2)-dimethylguanosine(27) in tRNA(Tyr) + 2 S-adenosyl-L-homocysteine + 2 H(+). Its function is as follows. Specifically dimethylates a single guanine residue at position 27 of tRNA(Tyr) using S-adenosyl-L-methionine as donor of the methyl groups. Dimethylation at position 27 of tRNA(Tyr) is required for efficient translation of tyrosine codons. Also required to maintain 3-(3-amino-3-carboxypropyl)uridine (acp3U) in the D-loop of several cytoplasmic tRNAs. May play a role in motor coordination and exploratory behavior. This is tRNA (guanine(27)-N(2))-dimethyltransferase from Mus musculus (Mouse).